A 174-amino-acid polypeptide reads, in one-letter code: C-type lectin domain family 2 member A (174 aa).

Residues 1-27 (MINPELRDGRADGFIHRIVPKLIQNWK) are Cytoplasmic-facing. Residues 28 to 48 (IGLMCFLSIIITTVCIIMIAT) form a helical; Signal-anchor for type II membrane protein membrane-spanning segment. Topologically, residues 49-174 (WSKHAKPVAC…WICSKPKYFL (126 aa)) are extracellular. Residues Cys58 and Cys69 are joined by a disulfide bond. Residues 65-174 (VRDKCFYFSD…WICSKPKYFL (110 aa)) form the C-type lectin domain. Asn78, Asn130, and Asn143 each carry an N-linked (GlcNAc...) asparagine glycan. Cys86 and Cys167 are oxidised to a cystine.

Homodimer; non-disulfide-linked. Interacts with KLRB1. Interacts with KLRF2. Post-translationally, N-glycosylated. As to expression, mainly expressed in skin. Also expressed in keratinocytes, spleen, thymus, small intestine, peripheral blood monocytes, bone marrow, ovary, testis and skin. High expression in CD8(+), B-lymphocytes and naive CD4(+) T-cells. Restricted mostly to proliferating lymphocytes. Not detected in myeloid leukocytes or natural killer (NK) cells.

It is found in the cell membrane. Membrane-bound protein expressed mainly on keratinocytes which acts as a ligand to stimulate the activating receptor NKp65/KLRF2, expressed on the surface of natural killer (NK) cells. Facilitates thereby dedicated immune recognition of keratinocytes leading to natural killer cell mediated cytotoxicity. Also plays a role in modulating the extent of T-cell expansion. The protein is C-type lectin domain family 2 member A (CLEC2A) of Homo sapiens (Human).